The primary structure comprises 162 residues: UPF0178 protein RSKD131_2223 (162 aa).

This sequence belongs to the UPF0178 family.

This chain is UPF0178 protein RSKD131_2223, found in Cereibacter sphaeroides (strain KD131 / KCTC 12085) (Rhodobacter sphaeroides).